A 460-amino-acid polypeptide reads, in one-letter code: MPVEILMPALSPTMEEGTLSKWLKNEGDKVSSGDVIAEIETDKATMEVEAVDEGTIGKLLIAAGTEGVKVNTPIAVLLQDGEAASDIDSMKTEAPKAETPKPAAAEAPAASAAPVAAQPKADVPSDPAIPAGTEMATMTVREALRDAMAEEMRANEDVFVMGEEVAEYQGAYKVTQGLLQEFGARRVVDTPITEHGFAGVGVGAAMTGLRPIVEFMTFNFAMQAIDQIINSAAKTLYMSGGQMGAPIVFRGPSGAAARVAAQHSQCYAAWYSHIPGLKVVMPYTAADAKGLLKAAIRDPNPVIFLENEILYGQSFEVPKLDDFVLPIGKARIHRTGKDATLVSFGIGMTYAIKAAAELEAQGIDVEIIDLRTIRPMDLPTVIESVKKTGRLVTVEEGYPQSSVGTEIATRVMQQAFDYLDAPILTIAGKDVPMPYAANLEKLALPNVAEVVDAVKAVCYK.

Residues 2–78 enclose the Lipoyl-binding domain; the sequence is PVEILMPALS…KVNTPIAVLL (77 aa). Residue Lys43 is modified to N6-lipoyllysine. Residues 91–131 form a disordered region; that stretch reads KTEAPKAETPKPAAAEAPAASAAPVAAQPKADVPSDPAIPA. The segment covering 100–121 has biased composition (low complexity); the sequence is PKPAAAEAPAASAAPVAAQPKA. Glu194 contributes to the thiamine diphosphate binding site.

In terms of assembly, heterodimer of an alpha and a beta chain. (R)-lipoate is required as a cofactor. Requires thiamine diphosphate as cofactor.

It carries out the reaction N(6)-[(R)-lipoyl]-L-lysyl-[protein] + pyruvate + H(+) = N(6)-[(R)-S(8)-acetyldihydrolipoyl]-L-lysyl-[protein] + CO2. In terms of biological role, the pyruvate dehydrogenase complex catalyzes the overall conversion of pyruvate to acetyl-CoA and CO(2). It contains multiple copies of three enzymatic components: pyruvate dehydrogenase (E1), dihydrolipoamide acetyltransferase (E2) and lipoamide dehydrogenase (E3). The chain is Pyruvate dehydrogenase E1 component subunit beta (pdhB) from Rhizobium meliloti (strain 1021) (Ensifer meliloti).